A 188-amino-acid polypeptide reads, in one-letter code: Zinc finger protein 428 (188 aa).

The disordered stretch occupies residues 1–162 (MTETREPAET…EEEEEEGTYH (162 aa)). Residues 40–61 (PDSEEEEDEEEEEEETTDDPEY) show a composition bias toward acidic residues. Positions 84-94 (RAAQPPAQPCQ) are enriched in low complexity. Thr108 is subject to Phosphothreonine. Residues 116-129 (PATAPQEAPAPEGR) show a composition bias toward low complexity. Over residues 138–149 (PPRAGEGRPAGR) the composition is skewed to basic and acidic residues. The C2H2-type zinc-finger motif lies at 161-183 (YHCTECEDSFDNLGELHGHFMLH).

This chain is Zinc finger protein 428 (ZNF428), found in Homo sapiens (Human).